A 102-amino-acid polypeptide reads, in one-letter code: Small ribosomal subunit protein uS10 (102 aa).

This sequence belongs to the universal ribosomal protein uS10 family. As to quaternary structure, part of the 30S ribosomal subunit.

Its function is as follows. Involved in the binding of tRNA to the ribosomes. This Nitrosospira multiformis (strain ATCC 25196 / NCIMB 11849 / C 71) protein is Small ribosomal subunit protein uS10.